Consider the following 357-residue polypeptide: Chorismate synthase (357 aa).

Residue R46 coordinates NADP(+). FMN-binding positions include 123–125 (RSS), 235–236 (NA), G275, 290–294 (KPTPS), and R316.

The protein belongs to the chorismate synthase family. Homotetramer. Requires FMNH2 as cofactor.

It carries out the reaction 5-O-(1-carboxyvinyl)-3-phosphoshikimate = chorismate + phosphate. It participates in metabolic intermediate biosynthesis; chorismate biosynthesis; chorismate from D-erythrose 4-phosphate and phosphoenolpyruvate: step 7/7. Catalyzes the anti-1,4-elimination of the C-3 phosphate and the C-6 proR hydrogen from 5-enolpyruvylshikimate-3-phosphate (EPSP) to yield chorismate, which is the branch point compound that serves as the starting substrate for the three terminal pathways of aromatic amino acid biosynthesis. This reaction introduces a second double bond into the aromatic ring system. In Sulfurovum sp. (strain NBC37-1), this protein is Chorismate synthase.